We begin with the raw amino-acid sequence, 90 residues long: Small ribosomal subunit protein uS15 (90 aa).

This sequence belongs to the universal ribosomal protein uS15 family. In terms of assembly, part of the 30S ribosomal subunit. Forms a bridge to the 50S subunit in the 70S ribosome, contacting the 23S rRNA.

One of the primary rRNA binding proteins, it binds directly to 16S rRNA where it helps nucleate assembly of the platform of the 30S subunit by binding and bridging several RNA helices of the 16S rRNA. Its function is as follows. Forms an intersubunit bridge (bridge B4) with the 23S rRNA of the 50S subunit in the ribosome. This Campylobacter jejuni subsp. jejuni serotype O:6 (strain 81116 / NCTC 11828) protein is Small ribosomal subunit protein uS15.